The primary structure comprises 131 residues: Small ribosomal subunit protein bS6 (131 aa).

The tract at residues 98 to 131 is disordered; it reads EASPMVKAKDERRERRDDFANETADDAEAGDSEE. Residues 104 to 116 are compositionally biased toward basic and acidic residues; it reads KAKDERRERRDDF. Positions 120–131 are enriched in acidic residues; the sequence is TADDAEAGDSEE.

This sequence belongs to the bacterial ribosomal protein bS6 family.

Its function is as follows. Binds together with bS18 to 16S ribosomal RNA. The chain is Small ribosomal subunit protein bS6 from Salmonella dublin (strain CT_02021853).